The following is a 502-amino-acid chain: Chromatin structure-remodeling complex protein RSC58 (502 aa).

One can recognise a Bromo domain in the interval 19 to 134; it reads SILNAASVKC…KFSSELLLRE (116 aa). The interval 336 to 378 is disordered; it reads NEEGINRKQNDENNKNVDGKSNGVQDDGGDNDNDATIASANSE. A compositionally biased stretch (basic and acidic residues) spans 339 to 353; the sequence is GINRKQNDENNKNVD.

Component of the two forms of the RSC complex composed of at least either RSC1 or RSC2, and ARP7, ARP9, LDB7, NPL6, RSC3, RSC30, RSC4, RSC58, RSC6, RSC8, RSC9, SFH1, STH1, HTL1 and probably RTT102. The complexes interact with histone and histone variant components of centromeric chromatin.

Its subcellular location is the nucleus. Functionally, component of the chromatin structure-remodeling complex (RSC), which is involved in transcription regulation and nucleosome positioning. RSC is responsible for the transfer of a histone octamer from a nucleosome core particle to naked DNA. The reaction requires ATP and involves an activated RSC-nucleosome intermediate. Remodeling reaction also involves DNA translocation, DNA twist and conformational change. As a reconfigurer of centromeric and flanking nucleosomes, RSC complex is required both for proper kinetochore function in chromosome segregation and, via a PKC1-dependent signaling pathway, for organization of the cellular cytoskeleton. The protein is Chromatin structure-remodeling complex protein RSC58 (RSC58) of Saccharomyces cerevisiae (strain ATCC 204508 / S288c) (Baker's yeast).